Reading from the N-terminus, the 224-residue chain is ATP synthase subunit a (224 aa).

A run of 6 helical transmembrane segments spans residues 17–37 (FIYM…VKMA), 78–98 (LVAT…VPGF), 104–124 (FLEF…YEGI), 136–156 (FLGP…VSHF), 176–196 (FLMV…YALL), and 201–221 (FLQA…AIAV).

It belongs to the ATPase A chain family. As to quaternary structure, F-type ATPases have 2 components, CF(1) - the catalytic core - and CF(0) - the membrane proton channel. CF(1) has five subunits: alpha(3), beta(3), gamma(1), delta(1), epsilon(1). CF(0) has three main subunits: a(1), b(2) and c(9-12). The alpha and beta chains form an alternating ring which encloses part of the gamma chain. CF(1) is attached to CF(0) by a central stalk formed by the gamma and epsilon chains, while a peripheral stalk is formed by the delta and b chains.

The protein resides in the cell inner membrane. Functionally, key component of the proton channel; it plays a direct role in the translocation of protons across the membrane. The protein is ATP synthase subunit a of Sulfurimonas denitrificans (strain ATCC 33889 / DSM 1251) (Thiomicrospira denitrificans (strain ATCC 33889 / DSM 1251)).